The chain runs to 175 residues: ADP-ribosylation factor 6 (175 aa).

A lipid anchor (N-myristoyl glycine) is attached at G2. K3 is lipidated: N6-myristoyl lysine. GTP-binding positions include 23–28 (AAGKTT), 41–44 (TIPT), 63–67 (DVGGQ), 122–125 (NKQD), and 155–156 (CA).

This sequence belongs to the small GTPase superfamily. Arf family.

It is found in the cytoplasm. The protein resides in the cytosol. Its subcellular location is the cell membrane. It localises to the endosome membrane. The protein localises to the recycling endosome membrane. It is found in the cell projection. The protein resides in the filopodium membrane. Its subcellular location is the ruffle. It localises to the cleavage furrow. The protein localises to the midbody. It is found in the midbody ring. It catalyses the reaction GTP + H2O = GDP + phosphate + H(+). Functionally, GTP-binding protein involved in protein trafficking; regulates endocytic recycling and cytoskeleton remodeling. May modulate vesicle budding and uncoating within the Golgi apparatus. May contribute to the regulation of dendritic branching, filopodia extension and dendritic spine development. In Gallus gallus (Chicken), this protein is ADP-ribosylation factor 6 (ARF6).